A 796-amino-acid chain; its full sequence is Probable phosphoketolase (796 aa).

This sequence belongs to the XFP family. The cofactor is thiamine diphosphate.

The polypeptide is Probable phosphoketolase (Clostridium acetobutylicum (strain ATCC 824 / DSM 792 / JCM 1419 / IAM 19013 / LMG 5710 / NBRC 13948 / NRRL B-527 / VKM B-1787 / 2291 / W)).